The sequence spans 450 residues: FAD-dependent monooxygenase okaB (450 aa).

The chain crosses the membrane as a helical span at residues 14–34; it reads IVIIIVGLGIAGLSAAIECHG. FAD-binding residues include E43 and R116. R194 is an active-site residue. The FAD site is built by D318 and G331.

It belongs to the paxM FAD-dependent monooxygenase family.

The protein resides in the membrane. The catalysed reaction is cyclo(N(8)-(alpha,alpha-dimethylallyl)-L-Trp-6a-(alpha,alpha-dimethylallyl)-L-Trp) + AH2 + O2 = okaramine C + A + H2O. It functions in the pathway alkaloid biosynthesis. Functionally, FAD-dependent monooxygenase; part of the gene cluster that mediates the biosynthesis of okaramine B, a prenylated indole alkaloid that possesses an unusual octacyclic ring system, including a four-membered azetidine ring and an eight-membered azocine ring, and that exhibits insecticidal activity against silkworm larvae. Within the pathway, okaC performs indole 2,3-epoxidation, facilitating the formation of the hexahydropyrrolo[2,3-b]indole (HPI) moiety of okaramine C. okaC then performs asymmetric reverse prenylation of cyclo(L-Trp-L-Trp) at N-1 and C-2' of the indole ring to produce the cyclic prenylated tryptophan dimer cyclo(N8-(alpha,alpha-dimethylallyl)-L-Trp-6a-(alpha,alpha-dime-thylallyl)-L-Trp). The biosynthesis begins with the NRPS okaA that condenses two tryptophan molecules into cyclo(L-Trp-L-Trp). Prenylation by the prenyltransferase okaC then leads to the formation of cyclo(N8-(alpha,alpha-dimethylallyl)-L-Trp-6a-(alpha,alpha-dime-thylallyl)-L-Trp). This is followed by indole 2,3-epoxidation by the FAD-dependent monooxygenase okaB to facilitate the formation of the hexahydropyrrolo[2,3-b]indole (HPI) moiety of okaramine C. The cytochrome P450 monooxygenase okaD then likely catalyzes formation of the eight-membered ring of okaramine A. The dioxygenase okaE further forms the unusual 2-dimethyl-3-methyl-azetidine ring to yield 12-deshydroxyl okaramine E, as well as the hydroxylation of 12-deshydroxyl okaramine E to produce okaramine E. The cytochrome P450 monoxygenase okaG converts 12-deshydroxyl okaramine E into 3-desmethyl okaramine B which is further methylated by the methyltransferase okaF into okaramine B. In a shunt pathway, okaG and okaF together are also able to convert okaramine E into okaramine D. Okaramine H is produced by nonenzymatic conversion from okaramine A. In Penicillium ochrochloron, this protein is FAD-dependent monooxygenase okaB.